Here is an 83-residue protein sequence, read N- to C-terminus: Major outer membrane lipoprotein (83 aa).

Residues 1 to 19 (MNNVLKFSALALAAVLATG) form the signal peptide. Cys-20 is lipidated: N-palmitoyl cysteine. Cys-20 carries the S-diacylglycerol cysteine lipid modification.

It is found in the cell outer membrane. This chain is Major outer membrane lipoprotein (oprI), found in Pseudomonas aeruginosa (strain ATCC 15692 / DSM 22644 / CIP 104116 / JCM 14847 / LMG 12228 / 1C / PRS 101 / PAO1).